Reading from the N-terminus, the 1330-residue chain is Pre-mRNA-splicing factor CWC22 homolog (1330 aa).

The tract at residues 1-377 (MGESDAESDS…AAKITERQRK (377 aa)) is disordered. A compositionally biased stretch (low complexity) spans 9–36 (DSSSNSSSSDTSSGSDSDARSESSSSES). Positions 46 to 94 (QEESAKDAKKTDDTDRGEKRAKERDAGQDEQPTEQKKTPAAEPRSERQH) are enriched in basic and acidic residues. The segment covering 99–113 (AGVEKQQEEAVAAAE) has biased composition (low complexity). Basic and acidic residues predominate over residues 115 to 135 (ESEKLNEAKKVETPVQRKEEA). The segment covering 138 to 148 (SSVTKELNSPK) has biased composition (polar residues). Residues 149-166 (AQEENAARELEERRKDEE) are compositionally biased toward basic and acidic residues. Residues 168-177 (PVTTNGSSKE) are compositionally biased toward polar residues. A phosphothreonine mark is found at Thr-191 and Thr-201. Composition is skewed to basic and acidic residues over residues 191 to 201 (TADHIEEGEIT) and 208 to 236 (LPTKEEKKAVASKSPPKETQRKQSRSPDG). Phosphoserine occurs at positions 219 and 221. Basic residues predominate over residues 252-277 (SRRRRRSRSKGSRTRSRSKSPIRRRS). Composition is skewed to basic and acidic residues over residues 278 to 307 (NSLERRRVERQRRHEERDKRDEERAKEREK) and 316 to 325 (SSRRRDDSRE). Over residues 355-366 (TETNADNETVTE) the composition is skewed to low complexity. One can recognise an MIF4G domain in the interval 420 to 603 (KKSIHGYINK…EVLFQIRKDG (184 aa)). The interval 660–697 (REILGSDDGSSSGSGSGSDSDSDSDGESGSDAEKKAEA) is disordered. Over residues 665–678 (SDDGSSSGSGSGSD) the composition is skewed to low complexity. Residues 679 to 689 (SDSDSDGESGS) are compositionally biased toward acidic residues. The 117-residue stretch at 710-826 (ALRRTIYLTI…SWDVLECIQL (117 aa)) folds into the MI domain. Residues 926–1330 (FRDGSAPAGN…RSSRRSKGRS (405 aa)) are disordered. A compositionally biased stretch (low complexity) spans 941 to 951 (SSSSSSSSSSD). Residues 952–963 (TDSEDSSEEDSS) are compositionally biased toward acidic residues. The span at 964–976 (SDSSSESSSSDSS) shows a compositional bias: low complexity. Residues 980–1012 (KKKRKRKDKDKKKSKKATKEKSKKTKNKKKKKK) show a composition bias toward basic residues. The span at 1013-1033 (AEKEQEKEKEKQRKSKKEKEK) shows a compositional bias: basic and acidic residues. The span at 1034–1054 (DKKRKKEEKKAAKKKSKHRRK) shows a compositional bias: basic residues. Low complexity predominate over residues 1072–1082 (SESSDSSNSSS). Residues 1089–1110 (PQAKIKRQEHVEKNKFRGRTQD) show a composition bias toward basic and acidic residues. Thr-1108 carries the phosphothreonine modification. A phosphoserine mark is found at Ser-1111, Ser-1121, Ser-1180, and Ser-1181. Basic and acidic residues-rich tracts occupy residues 1133-1195 (RRRD…VAHD) and 1203-1320 (SRSY…SRRE). Tyr-1182 carries the post-translational modification Phosphotyrosine. A compositionally biased stretch (basic residues) spans 1321 to 1330 (RSSRRSKGRS).

Belongs to the CWC22 family. In terms of assembly, component of the spliceosome C complex. Interacts with eIF4AIII.

The protein resides in the nucleus speckle. In terms of biological role, required for pre-mRNA splicing and for exon-junction complex (EJC) assembly. Hinders eIF4AIII from non-specifically binding RNA and escorts it to the splicing machinery to promote EJC assembly on mature mRNAs. The polypeptide is Pre-mRNA-splicing factor CWC22 homolog (ncm) (Drosophila melanogaster (Fruit fly)).